A 278-amino-acid polypeptide reads, in one-letter code: Non-homologous end joining protein Ku (278 aa).

The region spanning 9–172 (ISFGLVNIPV…MHFAQELVDV (164 aa)) is the Ku domain. The interval 255-278 (NQTGAGAKKKPAKTAKRGKSRKAA) is disordered. The span at 261 to 278 (AKKKPAKTAKRGKSRKAA) shows a compositional bias: basic residues.

This sequence belongs to the prokaryotic Ku family. As to quaternary structure, homodimer. Interacts with LigD.

Functionally, with LigD forms a non-homologous end joining (NHEJ) DNA repair enzyme, which repairs dsDNA breaks with reduced fidelity. Binds linear dsDNA with 5'- and 3'- overhangs but not closed circular dsDNA nor ssDNA. Recruits and stimulates the ligase activity of LigD. This is Non-homologous end joining protein Ku from Opitutus terrae (strain DSM 11246 / JCM 15787 / PB90-1).